The following is a 325-amino-acid chain: MNAFTQIDELVMPLPLEPQGYTIAPSKQSPRLLELTFARETVEAFVQAVAQWPVQALEYKSFLRFRVGEILDELCQGTLRPVLLNTILDRATGGMLITPIGLDDVSQAEDMVKFTTACAHLIGRSNYDAMSGQFYARFVVVNSDNSDSYLRQPHRVMELHNDGTFVNQITDYVLMLKIDEKNMEGGNSLLLHLDDWEQCEAFFRHPLARREMRWTAPPSKKVAEDVFHSVFDTDAEGRPTMRYIDQFVQPENYEEGIWLNALSESLEGSGKKVSVPVGVGSFLLINNLFWLHGRDRFTPHEGLRRELMRQRGYVAFPKPLYQRGQ.

Fe cation-binding residues include His160, Asp162, and His292.

The protein belongs to the glutarate hydroxylase family. As to quaternary structure, homotetramer. The cofactor is Fe(2+).

It carries out the reaction glutarate + 2-oxoglutarate + O2 = (S)-2-hydroxyglutarate + succinate + CO2. It participates in amino-acid degradation. Its function is as follows. Acts as an alpha-ketoglutarate-dependent dioxygenase catalyzing hydroxylation of glutarate (GA) to L-2-hydroxyglutarate (L2HG). Functions in a L-lysine degradation pathway that proceeds via cadaverine, glutarate and L-2-hydroxyglutarate. Is extremely specific for glutarate, but it can use both 2-oxoglutarate and 2-oxoadipate (2OA) as a cosubstrate for L2HG formation. This is Glutarate 2-hydroxylase from Pseudomonas putida (strain ATCC 47054 / DSM 6125 / CFBP 8728 / NCIMB 11950 / KT2440).